A 166-amino-acid polypeptide reads, in one-letter code: MSEPTPRRPAYARLLDRAVRILAVRDHSEQELRRKLSAPVMGKNGPEEIDATPDDYERVISWCHEHHYLDDNRFVIRFIASRSRKGYGPARIRQELNQKGIARESTEKAMRECDIDWSEMAREQAVRKYGEPLPSTFSEKVKVQRFLLYRGYLMDDIQEIWRNFAD.

Belongs to the RecX family.

It is found in the cytoplasm. Functionally, modulates RecA activity. The protein is Regulatory protein RecX of Salmonella arizonae (strain ATCC BAA-731 / CDC346-86 / RSK2980).